A 419-amino-acid polypeptide reads, in one-letter code: Epothilone C/D epoxidase (419 aa).

Residues A180 and G304 each contribute to the substrate site. C365 contacts heme.

This sequence belongs to the cytochrome P450 family. Heme serves as cofactor.

The catalysed reaction is epothilone C + 2 reduced [2Fe-2S]-[ferredoxin] + O2 + 2 H(+) = epothilone A + 2 oxidized [2Fe-2S]-[ferredoxin] + H2O. It carries out the reaction epothilone D + 2 reduced [2Fe-2S]-[ferredoxin] + O2 + 2 H(+) = epothilone B + 2 oxidized [2Fe-2S]-[ferredoxin] + H2O. It participates in secondary metabolite biosynthesis; epothilone biosynthesis. Involved in the biosynthesis of epothilones, macrolactones which have a narrow anti-fungal spectrum and microtubule-stabilizing activity. Catalyzes the epoxidation of epothilones C and D to epothilones A and B, respectively. The chain is Epothilone C/D epoxidase (cyp167A1) from Sorangium cellulosum (Polyangium cellulosum).